Reading from the N-terminus, the 1341-residue chain is uncharacterized protein (1341 aa).

Positions 41-68 (CLLCRRRKQRCDHKLPSCTACLKAGIKC) form a DNA-binding region, zn(2)-C6 fungal-type. Composition is skewed to low complexity over residues 72 to 93 (SKYSSSTSNSNTNNNTPTAGTV), 779 to 791 (SNSANAANLSNSN), 864 to 906 (SNSS…NDNN), 920 to 967 (NHNN…GNNS), and 1036 to 1050 (SPSKSSSISTASSHS). 4 disordered regions span residues 72–100 (SKYSSSTSNSNTNNNTPTAGTVPPTPHPV), 770–804 (ISSGDTLHDSNSANAANLSNSNDKNISHNGGMPPA), 864–971 (SNSS…QYVR), and 1031–1116 (TMTN…NSNP). The span at 1057 to 1076 (MTQSPTPYPQTSNMLPQQHV) shows a compositional bias: polar residues. Positions 1078–1090 (RPLPQQQREQPQQ) are enriched in low complexity. Over residues 1091 to 1116 (HITSPQRFSESNFTNQLNNGMINSNP) the composition is skewed to polar residues. Ser1143 carries the post-translational modification Phosphoserine. A compositionally biased stretch (polar residues) spans 1220–1230 (SQEPSSLSMDK). Residues 1220-1240 (SQEPSSLSMDKQQQQHQQQNM) are disordered.

It is found in the nucleus. This is an uncharacterized protein from Saccharomyces cerevisiae (strain ATCC 204508 / S288c) (Baker's yeast).